A 410-amino-acid polypeptide reads, in one-letter code: Proteasome-activating nucleotidase (410 aa).

A coiled-coil region spans residues 1-70 (MENNSQNVLK…LRGEIERFRT (70 aa)). ATP contacts are provided by residues 195 to 200 (GTGKTL) and H334. The interval 408–410 (MFG) is docks into pockets in the proteasome alpha-ring to cause gate opening.

This sequence belongs to the AAA ATPase family. Homohexamer. The hexameric complex has a two-ring architecture resembling a top hat that caps the 20S proteasome core at one or both ends. Upon ATP-binding, the C-terminus of PAN interacts with the alpha-rings of the proteasome core by binding to the intersubunit pockets.

The protein resides in the cytoplasm. ATPase which is responsible for recognizing, binding, unfolding and translocation of substrate proteins into the archaeal 20S proteasome core particle. Is essential for opening the gate of the 20S proteasome via an interaction with its C-terminus, thereby allowing substrate entry and access to the site of proteolysis. Thus, the C-termini of the proteasomal ATPase function like a 'key in a lock' to induce gate opening and therefore regulate proteolysis. Unfolding activity requires energy from ATP hydrolysis, whereas ATP binding alone promotes ATPase-20S proteasome association which triggers gate opening, and supports translocation of unfolded substrates. The protein is Proteasome-activating nucleotidase of Methanothermobacter thermautotrophicus (strain ATCC 29096 / DSM 1053 / JCM 10044 / NBRC 100330 / Delta H) (Methanobacterium thermoautotrophicum).